Here is a 400-residue protein sequence, read N- to C-terminus: Enoyl-[acyl-carrier-protein] reductase [NADH] (400 aa).

NAD(+) is bound by residues 48 to 53 (GSSSGY), 74 to 75 (FE), 111 to 112 (DA), and 139 to 140 (LA). Substrate is bound at residue Tyr225. The active-site Proton donor is Tyr235. NAD(+) contacts are provided by residues Lys244 and 273-275 (VVT).

Belongs to the TER reductase family. As to quaternary structure, monomer.

It carries out the reaction a 2,3-saturated acyl-[ACP] + NAD(+) = a (2E)-enoyl-[ACP] + NADH + H(+). It participates in lipid metabolism; fatty acid biosynthesis. Involved in the final reduction of the elongation cycle of fatty acid synthesis (FAS II). Catalyzes the reduction of a carbon-carbon double bond in an enoyl moiety that is covalently linked to an acyl carrier protein (ACP). In Shewanella woodyi (strain ATCC 51908 / MS32), this protein is Enoyl-[acyl-carrier-protein] reductase [NADH].